The chain runs to 316 residues: Daunorubicin resistance ATP-binding protein DrrA3 (316 aa).

The region spanning 6 to 236 (ITVDGAEKRY…TGGDRIDVVL (231 aa)) is the ABC transporter domain. An ATP-binding site is contributed by 38 to 45 (GPNGAGKT).

It belongs to the ABC transporter superfamily. Drug exporter-1 (DrugE1) (TC 3.A.1.105) family. The complex is probably composed of two ATP-binding proteins (DrrA3) and two transmembrane proteins (DrrB3).

Its subcellular location is the cell membrane. The enzyme catalyses daunorubicin(in) + ATP + H2O = daunorubicin(out) + ADP + phosphate + H(+). Its function is as follows. Part of the ABC transporter complex DrrA3B3 involved in daunorubicin efflux. Responsible for energy coupling to the transport system. Confers self-resistance to daunorubicin, an antibiotic produced by S.coeruleorubidus. The efficiency of DrrA3B3 to export daunorubicin is probably lower than that of DrrA1B1 or DrrA2B2. The sequence is that of Daunorubicin resistance ATP-binding protein DrrA3 from Streptomyces coeruleorubidus.